The sequence spans 379 residues: Putative F-box protein At5g62660 (379 aa).

The 50-residue stretch at alanine 35–valine 84 folds into the F-box domain.

This Arabidopsis thaliana (Mouse-ear cress) protein is Putative F-box protein At5g62660.